Here is a 350-residue protein sequence, read N- to C-terminus: MVFRIASSPYTHNQRQTSRIMMLVLIAALPGIATQLWFFGWGTLFQIILAAVSALAAEAAVLQLRKQPIAAILKDNSALLTGLLLAVSIPPLAPWWMVVLGTVFAVIIAKQLYGGLGQNPFNPAMIGYVVLLISFPVQMTSWLPPHDIAATAPGLLDALQVIFTGHTASGGDMNTLRMGIDGISQATPLDTFKTSLHAGHAVEQIMQYPIYSGMLAGAGWQWVNIAWLIGGVWLLWQKAIRWHIPVSFLVTLAVCSTLGWAFAGDSLASPQLHLLSGATMLGAFFILTDPVTASTTNRGRLIFGALAGLLVWLIRSFGGYPDGVAFAVLLANITVPLIDYYTRPRVYGHR.

A run of 5 helical transmembrane segments spans residues 20–40 (IMMLVLIAALPGIATQLWFFG), 42–62 (GTLFQIILAAVSALAAEAAVL), 68–88 (PIAAILKDNSALLTGLLLAVS), 89–109 (IPPLAPWWMVVLGTVFAVIIA), and 123–143 (PAMIGYVVLLISFPVQMTSWL). Residue T187 is modified to FMN phosphoryl threonine. 5 consecutive transmembrane segments (helical) span residues 215–235 (LAGAGWQWVNIAWLIGGVWLL), 244–264 (IPVSFLVTLAVCSTLGWAFAG), 267–287 (LASPQLHLLSGATMLGAFFIL), 301–321 (LIFGALAGLLVWLIRSFGGYP), and 322–342 (DGVAFAVLLANITVPLIDYYT).

Belongs to the NqrB/RnfD family. In terms of assembly, the complex is composed of six subunits: RnfA, RnfB, RnfC, RnfD, RnfE and RnfG. The cofactor is FMN.

The protein resides in the cell inner membrane. Part of a membrane-bound complex that couples electron transfer with translocation of ions across the membrane. The polypeptide is Ion-translocating oxidoreductase complex subunit D (Citrobacter koseri (strain ATCC BAA-895 / CDC 4225-83 / SGSC4696)).